A 72-amino-acid chain; its full sequence is Mitochondrial import receptor subunit TOM7-1 (72 aa).

Residues 2 to 41 (LKPKGKNTKKAAAADEDDGAVAVVGKFVKEWGTWTAKKAK) are Cytoplasmic-facing. A helical membrane pass occupies residues 42-59 (VITHYGFIPLVIIIGMNS). Residues 60 to 72 (EPKPSLSQLLSPV) are Mitochondrial intermembrane-facing.

Belongs to the Tom7 family. Forms part of the preprotein translocase complex of the outer mitochondrial membrane (TOM complex).

It localises to the mitochondrion outer membrane. Its function is as follows. Seems to act as a modulator of the dynamics of the mitochondrial protein transport machinery. Seems to promote the dissociation of subunits of the outer membrane translocase. The polypeptide is Mitochondrial import receptor subunit TOM7-1 (TOM7-1) (Solanum tuberosum (Potato)).